Here is a 167-residue protein sequence, read N- to C-terminus: Glutathione peroxidase 1 (167 aa).

The active site involves Cys-41.

It belongs to the glutathione peroxidase family.

The enzyme catalyses 2 glutathione + H2O2 = glutathione disulfide + 2 H2O. May constitute a glutathione peroxidase-like protective system against oxidative stresses. The polypeptide is Glutathione peroxidase 1 (GPXHA-1) (Helianthus annuus (Common sunflower)).